The chain runs to 722 residues: D-(-)-3-hydroxybutyrate oligomer hydrolase (722 aa).

An N-terminal signal peptide occupies residues 1–25 (MKTMQGKGSGRRLRGALLVTMAASG). Ser319 serves as the catalytic Charge relay system.

The protein belongs to the D-(-)-3-hydroxybutyrate oligomer hydrolase family.

It is found in the secreted. The catalysed reaction is (3R)-hydroxybutanoate dimer + H2O = 2 (R)-3-hydroxybutanoate + H(+). It participates in lipid metabolism; butanoate metabolism. Its activity is regulated as follows. Inhibited by diisopropylfluorophosphate (DFP). Functionally, participates in the degradation of poly-3-hydroxybutyrate (PHB). It works downstream of poly(3-hydroxybutyrate) depolymerase, hydrolyzing D(-)-3-hydroxybutyrate oligomers of various length (3HB-oligomers) into 3HB-monomers. The protein is D-(-)-3-hydroxybutyrate oligomer hydrolase of Ralstonia pickettii (Burkholderia pickettii).